The following is a 123-amino-acid chain: MEKKQNKRAKGEFYELMAQRYLEQHQLTFIARNFQSKTGELDLIMRDQDSFVFVEVKYRNTSNFGSAQEMVTWQKQRKLQRTALFWLMKNKLSVEHTSFRFDVVAIHAQGKEINWIKNAIVEG.

Belongs to the UPF0102 family.

This chain is UPF0102 protein VFMJ11_2324, found in Aliivibrio fischeri (strain MJ11) (Vibrio fischeri).